We begin with the raw amino-acid sequence, 297 residues long: Homoserine kinase (297 aa).

ATP is bound at residue 82–92; it reads PLTRGLGSSAS.

It belongs to the GHMP kinase family. Homoserine kinase subfamily.

It is found in the cytoplasm. The catalysed reaction is L-homoserine + ATP = O-phospho-L-homoserine + ADP + H(+). The protein operates within amino-acid biosynthesis; L-threonine biosynthesis; L-threonine from L-aspartate: step 4/5. Catalyzes the ATP-dependent phosphorylation of L-homoserine to L-homoserine phosphate. The protein is Homoserine kinase of Bacillus cereus (strain B4264).